Here is a 247-residue protein sequence, read N- to C-terminus: ATP synthase subunit a (247 aa).

A run of 6 helical transmembrane segments spans residues isoleucine 23–leucine 43, leucine 90–phenylalanine 110, valine 116–alanine 136, methionine 145–isoleucine 165, glycine 194–leucine 214, and serine 215–leucine 235.

This sequence belongs to the ATPase A chain family. As to quaternary structure, F-type ATPases have 2 components, CF(1) - the catalytic core - and CF(0) - the membrane proton channel. CF(1) has five subunits: alpha(3), beta(3), gamma(1), delta(1), epsilon(1). CF(0) has three main subunits: a(1), b(2) and c(9-12). The alpha and beta chains form an alternating ring which encloses part of the gamma chain. CF(1) is attached to CF(0) by a central stalk formed by the gamma and epsilon chains, while a peripheral stalk is formed by the delta and b chains.

It is found in the cell inner membrane. Key component of the proton channel; it plays a direct role in the translocation of protons across the membrane. The protein is ATP synthase subunit a of Paramagnetospirillum magneticum (strain ATCC 700264 / AMB-1) (Magnetospirillum magneticum).